Reading from the N-terminus, the 1481-residue chain is MQRSPLEKASVVSKLFFSWTRPILKKGYRQRLELSDIYHISSSDSADNLSEKLEREWDRELASKKNPKLINALRRCFFWRFMFYGIILYLGEVTKAVQPLLLGRIIASYDPDNKVERSIAIYLGIGLCLLFIVRTLLLHPAIFGLHHIGMQMRIAMFSLIYKKTLKLSSRVLDKISIGQLVSLLSNNLNKFDEGLALAHFVWIAPLQVTLLMGLLWDLLQAFTFCGLAFLVVLALLQAGLGKMMMKYRDQRAGKINERLVITSEMIENIQSVKAYCWEEAMEKIIENLRQTELKLTRKAAYVRYLNSSAFFFSGFFVVFLSVLPYALLKGIILRKIFTTISFCIVLRMAVTRQFPWAVQTWYDSLGAINKIQDFLQKQEYKTLEYNLTTTDVVMENVTAFWEEGFSKLFEKAKENNNNRKISNCDTSLFFSNLLLGTPVLKDISFKIERGQLLAVAGSTGAGKTSLLMMIMGELEPSEGKIKHSGRISFCSQYSWIMPGTIKDNIIFGVSYDEYRYRSVIKACQLEEDISKFSEKDNIVLGEGGITLSGGQRARISLARAVYKDADLYLLDSPFGYLDVLTEKEIFESCVCKLMANKTRILVTSKMEHLKKADKILILHEGSVYFYGTFSELQNQRPDFSSKLMGCDTFDQFTAERRNSIITETLRRFSLEGDTSVSWNETKKPSFKQTGEFGEKRKNSILNSINSIRKFSVVQKTSLQMNGIDGASDEPLERRLSLVPHSEPGEGILPRSNAVNSGPTFLGGRRQSVLNLMTCSSVNQGQSIHRKTATSTRKMSLAPQASLAEIDIYSRRLSQDTGLEISEEINEEDLRDCFFDDVENIPAVTTWNTYLRYITVHKSLMFVLIWCLVVFLVEVAASLVVLCLFPKILLQDKGNSTKNASNSYAVIITSTSSYYIFYIYVGVADTLLALGLFRGLPLVHTLITVSKTLHHKMLQSVLQAPMSTLNTLKTGGILNRFSKDIAVLDDLLPLTIFDFIQLLLIVIGAVVVVSVLQPYIFLATVPVIAAFILLRGYFLHTSQQLKQLESEGRSPIFTHLVTSLKGLWTLRAFGRQPYFETLFHKALNLHTANWFLYLSTLRWFQMRIEMIFVIFFIAVTFISILTTGEGEGRVGIILTLAMNIMGTLQWAVNSSIDVDSLMRSVSRVFKFIDMPTEDGKPNNSFRPSKDSQPSKVMIIENQHVKKDDIWPSGGQMTVKDLTAKYIDGGNAILENISFSISPGQRVGLLGRTGSGKSTLLLAFLRLLNTKGEIQIDGVSWDSITLQQWRKAFGVIPQKVFIFSGTFRKNLDPYEQWSDQEIWKVADEVGLRSVIEQFPGKLDFVLVDGGCVLSHGHKQLMCLARSVLSKAKILLLDEPSAHLDPITYQIIRRTLKQAFADCTVILSEHRIEAMLECQRFLVIEENKVRQYDSIQRMLSEKSLFRQAISPADRLKLLPHRNSSRQRSRANIAALKEETEEEVQETKL.

Residues 1 to 77 (MQRSPLEKAS…KLINALRRCF (77 aa)) are Cytoplasmic-facing. The helical transmembrane segment at 78–98 (FWRFMFYGIILYLGEVTKAVQ) threads the bilayer. The ABC transmembrane type-1 1 domain occupies 81–365 (FMFYGIILYL…WAVQTWYDSL (285 aa)). At 99–122 (PLLLGRIIASYDPDNKVERSIAIY) the chain is on the extracellular side. Residues 123–146 (LGIGLCLLFIVRTLLLHPAIFGLH) traverse the membrane as a helical segment. The Cytoplasmic portion of the chain corresponds to 147 to 195 (HIGMQMRIAMFSLIYKKTLKLSSRVLDKISIGQLVSLLSNNLNKFDEGL). The helical transmembrane segment at 196-216 (ALAHFVWIAPLQVTLLMGLLW) threads the bilayer. The Extracellular portion of the chain corresponds to 217–222 (DLLQAF). A helical transmembrane segment spans residues 223-243 (TFCGLAFLVVLALLQAGLGKM). Topologically, residues 244–298 (MMKYRDQRAGKINERLVITSEMIENIQSVKAYCWEEAMEKIIENLRQTELKLTRK) are cytoplasmic. Residues 299 to 319 (AAYVRYLNSSAFFFSGFFVVF) traverse the membrane as a helical segment. Over 320 to 339 (LSVLPYALLKGIILRKIFTT) the chain is Extracellular. Residues 340 to 358 (ISFCIVLRMAVTRQFPWAV) form a helical membrane-spanning segment. Residues 359–858 (QTWYDSLGAI…YLRYITVHKS (500 aa)) are Cytoplasmic-facing. Residues Trp-401, 457 to 464 (GSTGAGKT), and Gln-492 contribute to the ATP site. One can recognise an ABC transporter 1 domain in the interval 421 to 645 (ISNCDTSLFF…RPDFSSKLMG (225 aa)). Residue Cys-523 is the site of S-palmitoyl cysteine attachment. Phosphoserine occurs at positions 548 and 659. The tract at residues 653 to 831 (TAERRNSIIT…EEINEEDLRD (179 aa)) is disordered R region. Ser-669 carries the phosphoserine; by PKA modification. Phosphoserine is present on Ser-685. Lys-687 is covalently cross-linked (Glycyl lysine isopeptide (Lys-Gly) (interchain with G-Cter in ubiquitin)). Ser-699 and Ser-711 each carry phosphoserine. Thr-716 carries the post-translational modification Phosphothreonine. Residues Ser-736, Ser-767, Ser-790, Ser-795, and Ser-813 each carry the phosphoserine modification. The helical transmembrane segment at 859 to 879 (LMFVLIWCLVVFLVEVAASLV) threads the bilayer. The ABC transmembrane type-1 2 domain maps to 859-1155 (LMFVLIWCLV…AVNSSIDVDS (297 aa)). Residues 880–918 (VLCLFPKILLQDKGNSTKNASNSYAVIITSTSSYYIFYI) lie on the Extracellular side of the membrane. N-linked (GlcNAc...) asparagine glycosylation is found at Asn-894 and Asn-898. The chain crosses the membrane as a discontinuously helical span at residues 919–939 (YVGVADTLLALGLFRGLPLVH). The Cytoplasmic segment spans residues 940-990 (TLITVSKTLHHKMLQSVLQAPMSTLNTLKTGGILNRFSKDIAVLDDLLPLT). The helical transmembrane segment at 991–1011 (IFDFIQLLLIVIGAVVVVSVL) threads the bilayer. Over 1012–1013 (QP) the chain is Extracellular. The chain crosses the membrane as a helical span at residues 1014–1034 (YIFLATVPVIAAFILLRGYFL). At 1035–1095 (HTSQQLKQLE…TANWFLYLST (61 aa)) the chain is on the cytoplasmic side. Residues 1096–1116 (LRWFQMRIEMIFVIFFIAVTF) traverse the membrane as a helical segment. Topologically, residues 1117–1130 (ISILTTGEGEGRVG) are extracellular. A helical membrane pass occupies residues 1131-1151 (IILTLAMNIMGTLQWAVNSSI). Topologically, residues 1152 to 1481 (DVDSLMRSVS…TEEEVQETKL (330 aa)) are cytoplasmic. Residues 1211–1444 (MTVKDLTAKY…KSLFRQAISP (234 aa)) enclose the ABC transporter 2 domain. ATP-binding positions include Tyr-1220 and 1245–1252 (GRTGSGKS). The tract at residues 1387–1481 (RTLKQAFADC…TEEEVQETKL (95 aa)) is interaction with GORASP2. Cys-1396 carries S-palmitoyl cysteine lipidation. A Phosphoserine modification is found at Ser-1457. Residues 1479–1481 (TKL) carry the PDZ-binding motif.

Belongs to the ABC transporter superfamily. ABCC family. CFTR transporter (TC 3.A.1.202) subfamily. In terms of assembly, monomer; does not require oligomerization for channel activity. May form oligomers in the membrane. Interacts with SLC26A3, SLC26A6 and NHERF1. Interacts with SHANK2. Interacts with MYO6. Interacts (via C-terminus) with GOPC (via PDZ domain); this promotes CFTR internalization and thereby decreases channel activity. Interacts with SLC4A7 through NHERF1. Found in a complex with MYO5B and RAB11A. Interacts with ANO1. Interacts with SLC26A8. Interacts with AHCYL1; the interaction increases CFTR activity. Interacts with CSE1L. The core-glycosylated form interacts with GORASP2 (via PDZ GRASP-type 1 domain) in respone to ER stress. Interacts with MARCHF2; the interaction leads to CFTR ubiqtuitination and degradation. Interacts with ADGRG2. N-glycosylated. In terms of processing, phosphorylated; cAMP treatment promotes phosphorylation and activates the channel. Dephosphorylation decreases the ATPase activity (in vitro). Phosphorylation at PKA sites activates the channel. Phosphorylation at PKC sites enhances the response to phosphorylation by PKA. Phosphorylated by AMPK; this inhibits channel activity. Post-translationally, ubiquitinated, leading to its degradation in the lysosome. Deubiquitination by USP10 in early endosomes enhances its endocytic recycling to the cell membrane. Ubiquitinated by RNF185 during ER stress. Ubiquitinated by MARCHF2.

The protein resides in the apical cell membrane. It localises to the early endosome membrane. Its subcellular location is the cell membrane. It is found in the recycling endosome membrane. The protein localises to the endoplasmic reticulum membrane. The protein resides in the nucleus. It catalyses the reaction ATP + H2O + closed Cl(-) channel = ADP + phosphate + open Cl(-) channel.. It carries out the reaction chloride(in) = chloride(out). The enzyme catalyses hydrogencarbonate(in) = hydrogencarbonate(out). The catalysed reaction is ATP + H2O = ADP + phosphate + H(+). Its function is as follows. Epithelial ion channel that plays an important role in the regulation of epithelial ion and water transport and fluid homeostasis. Mediates the transport of chloride ions across the cell membrane. Possesses an intrinsic ATPase activity and utilizes ATP to gate its channel; the passive flow of anions through the channel is gated by cycles of ATP binding and hydrolysis by the ATP-binding domains. The ion channel is also permeable to HCO(3)(-); selectivity depends on the extracellular chloride concentration. Exerts its function also by modulating the activity of other ion channels and transporters. Contributes to the regulation of the pH and the ion content of the epithelial fluid layer. Modulates the activity of the epithelial sodium channel (ENaC) complex, in part by regulating the cell surface expression of the ENaC complex. May regulate bicarbonate secretion and salvage in epithelial cells by regulating the transporter SLC4A7. Can inhibit the chloride channel activity of ANO1. Plays a role in the chloride and bicarbonate homeostasis during sperm epididymal maturation and capacitation. The sequence is that of Cystic fibrosis transmembrane conductance regulator from Ovis aries (Sheep).